A 518-amino-acid polypeptide reads, in one-letter code: 2-isopropylmalate synthase (518 aa).

Residues 5-267 (VIIFDTTLRD…STKIKHKEIY (263 aa)) form the Pyruvate carboxyltransferase domain. Mn(2+)-binding residues include Asp14, His202, His204, and Asn238. The interval 392–518 (SLSFFSVQSI…KLKKLKKINN (127 aa)) is regulatory domain.

Belongs to the alpha-IPM synthase/homocitrate synthase family. LeuA type 1 subfamily. Homodimer. It depends on Mn(2+) as a cofactor.

It localises to the cytoplasm. It catalyses the reaction 3-methyl-2-oxobutanoate + acetyl-CoA + H2O = (2S)-2-isopropylmalate + CoA + H(+). Its pathway is amino-acid biosynthesis; L-leucine biosynthesis; L-leucine from 3-methyl-2-oxobutanoate: step 1/4. Its function is as follows. Catalyzes the condensation of the acetyl group of acetyl-CoA with 3-methyl-2-oxobutanoate (2-ketoisovalerate) to form 3-carboxy-3-hydroxy-4-methylpentanoate (2-isopropylmalate). The chain is 2-isopropylmalate synthase from Buchnera aphidicola subsp. Rhopalosiphum padi.